Here is a 66-residue protein sequence, read N- to C-terminus: Protein FliZ (66 aa).

May regulate sigma factor activity. This chain is Protein FliZ (fliZ), found in Yersinia enterocolitica.